We begin with the raw amino-acid sequence, 176 residues long: MAIGLEDKKAIVADVNETASSALSLVIADARGVTVGKMDALRKLARENNVRLRVVRNTLAKRAVQGTDFECVNEALVGPSLLGFSMEDPGAAARIFKDFAKEQDKFEVKALSVGGKLLPASQIDALAKLPTREQALGMLASVMIAPVTKLVRTFNEVPSKVTRAVAAVRDQKKDAA.

Belongs to the universal ribosomal protein uL10 family. In terms of assembly, part of the ribosomal stalk of the 50S ribosomal subunit. The N-terminus interacts with L11 and the large rRNA to form the base of the stalk. The C-terminus forms an elongated spine to which L12 dimers bind in a sequential fashion forming a multimeric L10(L12)X complex.

Its function is as follows. Forms part of the ribosomal stalk, playing a central role in the interaction of the ribosome with GTP-bound translation factors. In Teredinibacter turnerae (strain ATCC 39867 / T7901), this protein is Large ribosomal subunit protein uL10.